Reading from the N-terminus, the 1366-residue chain is MLAVGPAMDRDYPQHEPPPAGSLLYSPPPLQSAMLHCPYWNTFSLPPYPAFSSDSRPFMSSASFLGSQPCPDTSYAPVATASSLPPKTCDFAQDSSYFEDFSNISIFSSSVDSLSDIVDTPDFLPADSLNQVSTIWDDNPAPSTHDKLFQLSRPFAGFEDFLPSHSTPLLVSYQEQSVQSQPEEEDEAEEEEAEELGHTETYADYVPSKSKIGKQHPDRVVETSTLSSVPPPDITYTLALPSDSGALSALQLEAITYACQQHEVLLPSGQRAGFLIGDGAGVGKGRTVAGVILENHLRGRKKALWFSVSNDLKYDAERDLRDIEATGIAVHALSKIKYGDTTTSEGVLFATYSALIGESQAGGQHRTRLRQILDWCGEAFEGVIVFDECHKAKNAGSTKMGKAVLDLQNKLPLARVVYASATGASEPRNMIYMSRLGIWGEGTPFRNFEEFLHAIEKRGVGAMEIVAMDMKVSGMYIARQLSFSGVTFRIEEIPLAPAFECVYNRAALLWAEALNVFQQAADWIGLESRKSLWGQFWSAHQRFFKYLCIAAKVRRLVELAREELARDKCVVIGLQSTGEARTREVLGENDGHLNCFVSAAEGVFLSLIQKHFPSTKRKRDRGAGSKRKRRPRGRGAKAPRLACETAGVIRISDDSSTESDPGLDSDFNSSPESLVDDDVVIVDAVGLPSDDRGPLCLLQRDPHGPGVLERVERLKQDLLDKVRRLGRELPVNTLDELIDQLGGPQRVAEMTGRKGRVVSRPDGTVAFESRAEQGLSIDHVNLREKQRFMSGEKLVAIISEASSSGVSLQADRRVQNQRRRVHMTLELPWSADRAIQQFGRTHRSNQVSAPEYVFLISELAGERRFASIVAKRLESLGALTHGDRRATESRDLSKYNFENKYGTRALHCVLTTILSQTENKVPVPQGYPGGVPTFFRDMKQGLLSVGIGGRESRNGCLDVEKDCSITKFLNRILGLEVHKQNALFQYFSDTFDHLIEMDKREGKYDMGILDLAPGIEEIYEESQQVFLAPGHPQDGQVVFYKISVDRGLKWEDAFAKSLALTGPYDGFYLSYKVRGNKPSCLLAEQNRGQFFTVYKPNIGRQSQLEALDSLRRKFHRVTAEEAKEPWESGYALSLTHCSHSAWNRHCRLAQEGKDCLQGLRLRHHYMLCGALLRVWGRIAAVMADVSSSSYLQIVRLKTKDRKKQVGIKIPEGCVRRVLQELRLMDADVKRRQAPALGCPAPPAPRPLALPCGPGEVLDLTYSPPAEAFPPPPHFSFPAPLSLDAGPGVVPLGTPDAQADPAALAHQGCDINFKEVLEDMLRSLHAGPPSEGALGEGAGAGGAAGGGPERQSVIQFSPPFPGAQAPL.

Disordered stretches follow at residues 1-24 (MLAVGPAMDRDYPQHEPPPAGSLL), 174-217 (QEQS…KQHP), 614-640 (STKRKRDRGAGSKRKRRPRGRGAKAPR), and 1324-1366 (HAGP…QAPL). Residues 15–24 (HEPPPAGSLL) show a composition bias toward pro residues. Over residues 182 to 194 (PEEEDEAEEEEAE) the composition is skewed to acidic residues. A compositionally biased stretch (basic residues) spans 614–637 (STKRKRDRGAGSKRKRRPRGRGAK). Positions 1333–1347 (LGEGAGAGGAAGGGP) are enriched in gly residues.

This sequence belongs to the SBNO family. As to quaternary structure, interacts with TAL1; this interaction inhibits TAL1 occupancy of the DCSTAMP promoter, leading to the activation of the DCSTAMP promoter by the transcription factor MITF. In terms of tissue distribution, detected in macrophages. IL10 regulates expression in a STAT3-dependent way.

In terms of biological role, acts as a transcriptional coregulator, that can have both coactivator and corepressor functions. Inhibits the DCSTAMP-repressive activity of TAL1, hence enhancing the access of the transcription factor MITF to the DC-STAMP promoter in osteoclast. Plays a role in bone homeostasis; required as a positive regulator in TNFSF11//RANKL-mediated osteoclast fusion via a DCSTAMP-dependent pathway. May also be required in the regulation of osteoblast differentiation. Involved in the transcriptional corepression of NF-kappaB in macrophages. Plays a role as a regulator in the pro-inflammatory cascade. In Homo sapiens (Human), this protein is Protein strawberry notch homolog 2 (SBNO2).